We begin with the raw amino-acid sequence, 1072 residues long: Carbamoyl phosphate synthase large chain (1072 aa).

The interval 1-401 (MPKYKDISKV…SLLKAVRSLE (401 aa)) is carboxyphosphate synthetic domain. Residues arginine 129, arginine 169, glycine 175, glycine 176, lysine 208, leucine 210, glutamate 215, glycine 241, valine 242, histidine 243, glutamine 284, and glutamate 298 each contribute to the ATP site. The 195-residue stretch at 133-327 (KRKMQEIGEP…IAKIAAKIAI (195 aa)) folds into the ATP-grasp 1 domain. Residues glutamine 284, glutamate 298, and asparagine 300 each contribute to the Mg(2+) site. Glutamine 284, glutamate 298, and asparagine 300 together coordinate Mn(2+). Positions 402–544 (IKAYGLRLDS…YIYSTYCEED (143 aa)) are oligomerization domain. Residues 545-929 (EVETHDIPKV…ALYKALEGAG (385 aa)) are carbamoyl phosphate synthetic domain. The region spanning 671-861 (SKLLKELNIN…MVKLAVEVAL (191 aa)) is the ATP-grasp 2 domain. The ATP site is built by arginine 707, lysine 746, isoleucine 748, glutamate 752, glycine 777, valine 778, histidine 779, serine 780, glutamine 820, and glutamate 832. Positions 820, 832, and 834 each coordinate Mg(2+). Residues glutamine 820, glutamate 832, and asparagine 834 each coordinate Mn(2+). The region spanning 930–1072 (LKIPKKGKIL…QKDNVKNLVL (143 aa)) is the MGS-like domain. The tract at residues 930–1072 (LKIPKKGKIL…QKDNVKNLVL (143 aa)) is allosteric domain.

This sequence belongs to the CarB family. Composed of two chains; the small (or glutamine) chain promotes the hydrolysis of glutamine to ammonia, which is used by the large (or ammonia) chain to synthesize carbamoyl phosphate. Tetramer of heterodimers (alpha,beta)4. Mg(2+) serves as cofactor. Requires Mn(2+) as cofactor.

It carries out the reaction hydrogencarbonate + L-glutamine + 2 ATP + H2O = carbamoyl phosphate + L-glutamate + 2 ADP + phosphate + 2 H(+). The enzyme catalyses hydrogencarbonate + NH4(+) + 2 ATP = carbamoyl phosphate + 2 ADP + phosphate + 2 H(+). It participates in amino-acid biosynthesis; L-arginine biosynthesis; carbamoyl phosphate from bicarbonate: step 1/1. Its pathway is pyrimidine metabolism; UMP biosynthesis via de novo pathway; (S)-dihydroorotate from bicarbonate: step 1/3. Its function is as follows. Large subunit of the glutamine-dependent carbamoyl phosphate synthetase (CPSase). CPSase catalyzes the formation of carbamoyl phosphate from the ammonia moiety of glutamine, carbonate, and phosphate donated by ATP, constituting the first step of 2 biosynthetic pathways, one leading to arginine and/or urea and the other to pyrimidine nucleotides. The large subunit (synthetase) binds the substrates ammonia (free or transferred from glutamine from the small subunit), hydrogencarbonate and ATP and carries out an ATP-coupled ligase reaction, activating hydrogencarbonate by forming carboxy phosphate which reacts with ammonia to form carbamoyl phosphate. The sequence is that of Carbamoyl phosphate synthase large chain from Caldanaerobacter subterraneus subsp. tengcongensis (strain DSM 15242 / JCM 11007 / NBRC 100824 / MB4) (Thermoanaerobacter tengcongensis).